Here is a 55-residue protein sequence, read N- to C-terminus: Protein CADMIUM TOLERANCE 1 (55 aa).

A helical transmembrane segment spans residues 24 to 40; it reads GCLYACIFTALCCFCCY.

The protein belongs to the CYSTM1 family.

The protein resides in the cell membrane. The protein localises to the secreted. Its subcellular location is the cell wall. In terms of biological role, confers resistance to heavy metal ions (e.g. cadmium (CdCl(2)) and copper (CuCl(2))) by chelating them at the plasma membrane of root cells, thus stopping their entry and reducing their accumulation. Binds to aluminium (Al). In Oryza sativa subsp. indica (Rice), this protein is Protein CADMIUM TOLERANCE 1.